We begin with the raw amino-acid sequence, 186 residues long: ADP-ribosylation factor-like protein 8A (186 aa).

The segment at residues 1–19 (MLALFNKLLDWFKALFWKE) is an intramembrane region (note=Mediates targeting to membranes). GTP-binding positions include 29–35 (QYSGKTT), 71–75 (DIGGQ), and 130–133 (NKRD).

The protein belongs to the small GTPase superfamily. Arf family.

The protein localises to the late endosome membrane. It localises to the lysosome membrane. May play a role in lysosomes motility. Alternatively, may play a role in chromosome segregation. The chain is ADP-ribosylation factor-like protein 8A (arl8a) from Xenopus tropicalis (Western clawed frog).